A 249-amino-acid chain; its full sequence is tRNA (guanine-N(1)-)-methyltransferase (249 aa).

S-adenosyl-L-methionine contacts are provided by residues Gly121 and 141-146 (LGDFVL).

This sequence belongs to the RNA methyltransferase TrmD family. In terms of assembly, homodimer.

It localises to the cytoplasm. It carries out the reaction guanosine(37) in tRNA + S-adenosyl-L-methionine = N(1)-methylguanosine(37) in tRNA + S-adenosyl-L-homocysteine + H(+). Its function is as follows. Specifically methylates guanosine-37 in various tRNAs. In Cereibacter sphaeroides (strain KD131 / KCTC 12085) (Rhodobacter sphaeroides), this protein is tRNA (guanine-N(1)-)-methyltransferase.